Reading from the N-terminus, the 141-residue chain is Large ribosomal subunit protein uL11 (141 aa).

Belongs to the universal ribosomal protein uL11 family. As to quaternary structure, part of the ribosomal stalk of the 50S ribosomal subunit. Interacts with L10 and the large rRNA to form the base of the stalk. L10 forms an elongated spine to which L12 dimers bind in a sequential fashion forming a multimeric L10(L12)X complex. One or more lysine residues are methylated.

Forms part of the ribosomal stalk which helps the ribosome interact with GTP-bound translation factors. The polypeptide is Large ribosomal subunit protein uL11 (Nitratiruptor sp. (strain SB155-2)).